A 250-amino-acid chain; its full sequence is 5-oxoprolinase subunit A (250 aa).

This sequence belongs to the LamB/PxpA family. As to quaternary structure, forms a complex composed of PxpA, PxpB and PxpC.

It catalyses the reaction 5-oxo-L-proline + ATP + 2 H2O = L-glutamate + ADP + phosphate + H(+). Functionally, catalyzes the cleavage of 5-oxoproline to form L-glutamate coupled to the hydrolysis of ATP to ADP and inorganic phosphate. The protein is 5-oxoprolinase subunit A of Chromohalobacter salexigens (strain ATCC BAA-138 / DSM 3043 / CIP 106854 / NCIMB 13768 / 1H11).